The chain runs to 713 residues: Protein-glucosylgalactosylhydroxylysine glucosidase (713 aa).

An N-terminal signal peptide occupies residues 1 to 21; it reads MIINSQEYLQPPQWWNERVEA. N-linked (GlcNAc...) asparagine glycans are attached at residues Asn104, Asn160, Asn171, Asn186, and Asn283. 317–318 is a binding site for substrate; it reads WD. A glycan (N-linked (GlcNAc...) asparagine) is linked at Asn361. Glu451 (proton donor) is an active-site residue. 2 N-linked (GlcNAc...) asparagine glycosylation sites follow: Asn457 and Asn481. 521-522 serves as a coordination point for substrate; the sequence is KQ. Asn535, Asn576, and Asn662 each carry an N-linked (GlcNAc...) asparagine glycan.

It belongs to the glycosyl hydrolase 65 family.

The protein resides in the secreted. The catalysed reaction is (5R)-5-O-[alpha-D-glucosyl-(1-&gt;2)-beta-D-galactosyl]-5-hydroxy-L-lysyl-[collagen] + H2O = (5R)-5-O-(beta-D-galactosyl)-5-hydroxy-L-lysyl-[collagen] + D-glucose. Its function is as follows. Catalyzes the hydrolysis of glucose from the disaccharide unit linked to hydroxylysine residues of collagen and collagen-like proteins. This is Protein-glucosylgalactosylhydroxylysine glucosidase from Dictyostelium discoideum (Social amoeba).